A 417-amino-acid polypeptide reads, in one-letter code: Lipoyl synthase, mitochondrial (417 aa).

The transit peptide at 1–26 directs the protein to the mitochondrion; it reads MAVCARGLRCLGTPAVSLRLAASRSY. Residues 27-61 form a disordered region; sequence ATTTPPDPAIPNTPGAAATSSPAKRPRTSFQDKLN. The segment covering 44–58 has biased composition (polar residues); that stretch reads ATSSPAKRPRTSFQD. Residues cysteine 134, cysteine 139, cysteine 145, cysteine 165, cysteine 169, cysteine 172, and serine 380 each contribute to the [4Fe-4S] cluster site. The Radical SAM core domain occupies 148–369; it reads GGSKSAATAT…KEKALEMGFL (222 aa). The interval 398 to 417 is disordered; the sequence is ESTGPGSASVQDVATGDLVR.

This sequence belongs to the radical SAM superfamily. Lipoyl synthase family. Requires [4Fe-4S] cluster as cofactor.

The protein resides in the mitochondrion. It catalyses the reaction [[Fe-S] cluster scaffold protein carrying a second [4Fe-4S](2+) cluster] + N(6)-octanoyl-L-lysyl-[protein] + 2 oxidized [2Fe-2S]-[ferredoxin] + 2 S-adenosyl-L-methionine + 4 H(+) = [[Fe-S] cluster scaffold protein] + N(6)-[(R)-dihydrolipoyl]-L-lysyl-[protein] + 4 Fe(3+) + 2 hydrogen sulfide + 2 5'-deoxyadenosine + 2 L-methionine + 2 reduced [2Fe-2S]-[ferredoxin]. The protein operates within protein modification; protein lipoylation via endogenous pathway; protein N(6)-(lipoyl)lysine from octanoyl-[acyl-carrier-protein]: step 2/2. Functionally, catalyzes the radical-mediated insertion of two sulfur atoms into the C-6 and C-8 positions of the octanoyl moiety bound to the lipoyl domains of lipoate-dependent enzymes, thereby converting the octanoylated domains into lipoylated derivatives. The chain is Lipoyl synthase, mitochondrial from Uncinocarpus reesii (strain UAMH 1704).